We begin with the raw amino-acid sequence, 194 residues long: Cilia- and flagella-associated protein 107 (194 aa).

2 mn regions span residues 45-60 and 95-107; these read TPQS…FPDH and ISTY…RHGY.

As to quaternary structure, microtubule inner protein component of sperm flagellar doublet microtubules. In terms of tissue distribution, expressed in airway epithelial cells.

It localises to the cytoplasm. It is found in the cytoskeleton. The protein resides in the cilium axoneme. The protein localises to the flagellum axoneme. Microtubule inner protein (MIP) part of the dynein-decorated doublet microtubules (DMTs) in cilia axoneme, which is required for motile cilia beating. This chain is Cilia- and flagella-associated protein 107, found in Homo sapiens (Human).